Consider the following 76-residue polypeptide: Sec-independent protein translocase protein TatA (76 aa).

The helical transmembrane segment at 1–21 (MGGLSIWHWLIVLLIVALVFG) threads the bilayer. Residues 40–76 (KDGMKEGETPADAQQLPRTGTVDVNAKETTRSDSNKA) form a disordered region. The span at 64-76 (NAKETTRSDSNKA) shows a compositional bias: basic and acidic residues.

Belongs to the TatA/E family. As to quaternary structure, the Tat system comprises two distinct complexes: a TatABC complex, containing multiple copies of TatA, TatB and TatC subunits, and a separate TatA complex, containing only TatA subunits. Substrates initially bind to the TatABC complex, which probably triggers association of the separate TatA complex to form the active translocon.

It localises to the cell inner membrane. Its function is as follows. Part of the twin-arginine translocation (Tat) system that transports large folded proteins containing a characteristic twin-arginine motif in their signal peptide across membranes. TatA could form the protein-conducting channel of the Tat system. This is Sec-independent protein translocase protein TatA from Burkholderia ambifaria (strain MC40-6).